We begin with the raw amino-acid sequence, 263 residues long: MARGPKKHLKRVAAPKHWMLDKLTGVFAPRPSTGPHKLRECLPLIVFLRNRLKYALTGDEVKKICMQRFIKIDGKVRVDITYPAGFMDVISIDKTGEHFRLVYDTKGRFAVQRITVEEAKYKLCKVRKITVGMKGIPHLVTHDARTIRYPDPLIKVNDTVQIDLGTGKIINFIKFDTGNVCMVIGGANLGRVGVITNRERHPGSFDVVHVKDANGNSFATRISNIFVIGNGNKPWISLPRGKGIRLTIAEERDKRLATKQSSG.

The S4 RNA-binding domain maps to 42-104 (LPLIVFLRNR…TGEHFRLVYD (63 aa)).

This sequence belongs to the eukaryotic ribosomal protein eS4 family.

In Pongo pygmaeus (Bornean orangutan), this protein is Small ribosomal subunit protein eS4 (RPS4Y1).